Consider the following 144-residue polypeptide: Large ribosomal subunit protein uL15 (144 aa).

The tract at residues 1–51 (MKLNELKPATGSRSKRLRKGRGLSSGHGFTSGRGTKGQKAHGKTRLGFEGG) is disordered. Residues 23–35 (LSSGHGFTSGRGT) are compositionally biased toward gly residues.

The protein belongs to the universal ribosomal protein uL15 family. As to quaternary structure, part of the 50S ribosomal subunit.

Functionally, binds to the 23S rRNA. The polypeptide is Large ribosomal subunit protein uL15 (Limosilactobacillus reuteri (strain DSM 20016) (Lactobacillus reuteri)).